The chain runs to 793 residues: Kinesin-like protein KIN-14C (793 aa).

A disordered region spans residues 1–43 (MASRNQNRPPRSPNAKKEGLGGISFDKRRKVETQGGTGRRQAF). Positions 1-69 (MASRNQNRPP…IEECGKVDFT (69 aa)) are globular. Residues 15–32 (AKKEGLGGISFDKRRKVE) show a composition bias toward basic and acidic residues. The stretch at 120–375 (KENLKVSLES…EQQLAIANER (256 aa)) forms a coiled coil. Residues 431-772 (NIRVFCRVRP…LRFAARVNAC (342 aa)) form the Kinesin motor domain. ATP is bound at residue 516–523 (GQTGSGKT).

It belongs to the TRAFAC class myosin-kinesin ATPase superfamily. Kinesin family. KIN-14 subfamily.

It is found in the cytoplasm. Its subcellular location is the cytoskeleton. The protein resides in the spindle. It localises to the phragmoplast. The protein localises to the chromosome. It is found in the centromere. Its subcellular location is the kinetochore. In terms of biological role, kinesin that supports microtubule movement in an ATP-dependent manner and has a minus-end directed polarity. Plays a crucial role in spindle morphogenesis in male meiosis. In mitosis, is required for normal microtubule accumulation at the spindle poles during prophase and may play a role in spindle assembly during prometaphase. The protein is Kinesin-like protein KIN-14C of Arabidopsis thaliana (Mouse-ear cress).